Reading from the N-terminus, the 203-residue chain is Imidazole glycerol phosphate synthase subunit HisH 1 (203 aa).

In terms of domain architecture, Glutamine amidotransferase type-1 spans 1 to 203 (MIAIIDYNAG…KMIENFVELI (203 aa)). Catalysis depends on Cys-82, which acts as the Nucleophile. Residues His-184 and Glu-186 contribute to the active site.

In terms of assembly, heterodimer of HisH and HisF.

It localises to the cytoplasm. It carries out the reaction 5-[(5-phospho-1-deoxy-D-ribulos-1-ylimino)methylamino]-1-(5-phospho-beta-D-ribosyl)imidazole-4-carboxamide + L-glutamine = D-erythro-1-(imidazol-4-yl)glycerol 3-phosphate + 5-amino-1-(5-phospho-beta-D-ribosyl)imidazole-4-carboxamide + L-glutamate + H(+). The catalysed reaction is L-glutamine + H2O = L-glutamate + NH4(+). The protein operates within amino-acid biosynthesis; L-histidine biosynthesis; L-histidine from 5-phospho-alpha-D-ribose 1-diphosphate: step 5/9. Functionally, IGPS catalyzes the conversion of PRFAR and glutamine to IGP, AICAR and glutamate. The HisH subunit provides the glutamine amidotransferase activity that produces the ammonia necessary to HisF for the synthesis of IGP and AICAR. The sequence is that of Imidazole glycerol phosphate synthase subunit HisH 1 (hisH1) from Methanococcus maripaludis (strain DSM 14266 / JCM 13030 / NBRC 101832 / S2 / LL).